Reading from the N-terminus, the 438-residue chain is GTPase Obg (438 aa).

The 159-residue stretch at 6-164 (AEFVDRVKIF…RWLELELKIL (159 aa)) folds into the Obg domain. One can recognise an OBG-type G domain in the interval 165–335 (ADVGLVGYPN…LLDRVASIVR (171 aa)). GTP contacts are provided by residues 171-178 (GYPNVGKS), 196-200 (FTTLV), 217-220 (DIPG), 287-290 (NKID), and 316-318 (SAV). The Mg(2+) site is built by Ser178 and Thr198. The OCT domain maps to 358-438 (VWRKLPERFE…IGNFEFEYRE (81 aa)).

This sequence belongs to the TRAFAC class OBG-HflX-like GTPase superfamily. OBG GTPase family. As to quaternary structure, monomer. The cofactor is Mg(2+).

Its subcellular location is the cytoplasm. Functionally, an essential GTPase which binds GTP, GDP and possibly (p)ppGpp with moderate affinity, with high nucleotide exchange rates and a fairly low GTP hydrolysis rate. Plays a role in control of the cell cycle, stress response, ribosome biogenesis and in those bacteria that undergo differentiation, in morphogenesis control. This Thermotoga neapolitana (strain ATCC 49049 / DSM 4359 / NBRC 107923 / NS-E) protein is GTPase Obg.